A 554-amino-acid polypeptide reads, in one-letter code: CTP synthase (554 aa).

An amidoligase domain region spans residues 1-265 (MTPLIFVTGG…DEIVIDQFKL (265 aa)). Ser-13 serves as a coordination point for CTP. Ser-13 serves as a coordination point for UTP. Residues 14-19 (SLGKGI) and Asp-71 contribute to the ATP site. Asp-71 and Glu-139 together coordinate Mg(2+). Residues 146–148 (DIE), 186–191 (KTKPTQ), and Lys-222 contribute to the CTP site. Residues 186–191 (KTKPTQ) and Lys-222 each bind UTP. The 254-residue stretch at 292–545 (TIAVVGKYVD…VKASRARKAG (254 aa)) folds into the Glutamine amidotransferase type-1 domain. Residue Gly-353 participates in L-glutamine binding. The active-site Nucleophile; for glutamine hydrolysis is the Cys-380. L-glutamine contacts are provided by residues 381–384 (YGMQ), Glu-404, and Arg-471. Active-site residues include His-518 and Glu-520.

Belongs to the CTP synthase family. In terms of assembly, homotetramer.

The catalysed reaction is UTP + L-glutamine + ATP + H2O = CTP + L-glutamate + ADP + phosphate + 2 H(+). The enzyme catalyses L-glutamine + H2O = L-glutamate + NH4(+). It catalyses the reaction UTP + NH4(+) + ATP = CTP + ADP + phosphate + 2 H(+). Its pathway is pyrimidine metabolism; CTP biosynthesis via de novo pathway; CTP from UDP: step 2/2. With respect to regulation, allosterically activated by GTP, when glutamine is the substrate; GTP has no effect on the reaction when ammonia is the substrate. The allosteric effector GTP functions by stabilizing the protein conformation that binds the tetrahedral intermediate(s) formed during glutamine hydrolysis. Inhibited by the product CTP, via allosteric rather than competitive inhibition. Catalyzes the ATP-dependent amination of UTP to CTP with either L-glutamine or ammonia as the source of nitrogen. Regulates intracellular CTP levels through interactions with the four ribonucleotide triphosphates. This is CTP synthase from Xylella fastidiosa (strain M12).